The sequence spans 147 residues: Large ribosomal subunit protein uL15 (147 aa).

The interval 1–54 (MRLSDIKPTPGSMKKRTRVGRGIGSGKGKTSGKGHKGQKARGRGKVHPWFEGGQ) is disordered. Basic residues predominate over residues 30–46 (TSGKGHKGQKARGRGKV).

Belongs to the universal ribosomal protein uL15 family. Part of the 50S ribosomal subunit.

In terms of biological role, binds to the 23S rRNA. In Thermosipho melanesiensis (strain DSM 12029 / CIP 104789 / BI429), this protein is Large ribosomal subunit protein uL15.